Here is a 129-residue protein sequence, read N- to C-terminus: Profilin-4 (129 aa).

Belongs to the profilin family.

Its subcellular location is the cytoplasm. Functionally, involved in male fertility. Required for manchette development and acrosome biogenesis during spermiogenesis. Binds in vitro to phospholipids, including phosphatidylinositol 3-phosphate (PtdIns(3)P), phosphatidylinositol 4,5-bisphosphate (PtdIns(4,5)P2), phosphatidylinositol 4-phosphate (PtdIns(4)P) and phosphatidic acid (PA). Contrary to other profilin family members, does not bind to actin in vitro. The chain is Profilin-4 (PFN4) from Bos taurus (Bovine).